A 63-amino-acid chain; its full sequence is Period circadian protein (63 aa).

Positions 1-63 are disordered; that stretch reads EGSGGSGSSG…VTLTESLLNK (63 aa). 2 stretches are compositionally biased toward low complexity: residues 9–31 and 39–49; these read SGNF…NAGT and SAAASGASVNA. A compositionally biased stretch (polar residues) spans 54–63; that stretch reads VTLTESLLNK.

Forms a heterodimer with timeless (TIM); the complex then translocates into the nucleus. Phosphorylated with a circadian rhythmicity, probably by the double-time protein (dbt). Phosphorylation could be implicated in the stability of per monomer and in the formation of heterodimer per-tim.

The protein localises to the nucleus. It is found in the cytoplasm. Its subcellular location is the perinuclear region. Functionally, essential for biological clock functions. Determines the period length of circadian and ultradian rhythms; an increase in PER dosage leads to shortened circadian rhythms and a decrease leads to lengthened circadian rhythms. Essential for the circadian rhythmicity of locomotor activity, eclosion behavior, and for the rhythmic component of the male courtship song that originates in the thoracic nervous system. The biological cycle depends on the rhythmic formation and nuclear localization of the TIM-PER complex. Light induces the degradation of TIM, which promotes elimination of PER. Nuclear activity of the heterodimer coordinatively regulates PER and TIM transcription through a negative feedback loop. Behaves as a negative element in circadian transcriptional loop. Does not appear to bind DNA, suggesting indirect transcriptional inhibition. This is Period circadian protein (per) from Drosophila immigrans (Fruit fly).